Here is a 120-residue protein sequence, read N- to C-terminus: HTH-type transcriptional regulator MerD (120 aa).

In terms of domain architecture, HTH merR-type spans 3 to 72 (AYTVSQLAHN…LDALARLCRA (70 aa)). Positions 6-25 (VSQLAHNAGVSVHIVRDYLV) form a DNA-binding region, H-T-H motif.

The polypeptide is HTH-type transcriptional regulator MerD (merD) (Shigella flexneri).